We begin with the raw amino-acid sequence, 206 residues long: ATP synthase subunit b (206 aa).

Residues 10–30 (LLKPFVSTAAICLLVAGTVVL) traverse the membrane as a helical segment.

The protein belongs to the ATPase B chain family. In terms of assembly, F-type ATPases have 2 components, F(1) - the catalytic core - and F(0) - the membrane proton channel. F(1) has five subunits: alpha(3), beta(3), gamma(1), delta(1), epsilon(1). F(0) has three main subunits: a(1), b(2) and c(10-14). The alpha and beta chains form an alternating ring which encloses part of the gamma chain. F(1) is attached to F(0) by a central stalk formed by the gamma and epsilon chains, while a peripheral stalk is formed by the delta and b chains.

It localises to the cell inner membrane. Functionally, f(1)F(0) ATP synthase produces ATP from ADP in the presence of a proton or sodium gradient. F-type ATPases consist of two structural domains, F(1) containing the extramembraneous catalytic core and F(0) containing the membrane proton channel, linked together by a central stalk and a peripheral stalk. During catalysis, ATP synthesis in the catalytic domain of F(1) is coupled via a rotary mechanism of the central stalk subunits to proton translocation. Component of the F(0) channel, it forms part of the peripheral stalk, linking F(1) to F(0). This chain is ATP synthase subunit b, found in Geobacter sulfurreducens (strain ATCC 51573 / DSM 12127 / PCA).